Reading from the N-terminus, the 215-residue chain is Adenylate kinase (215 aa).

10–15 contributes to the ATP binding site; the sequence is GAGKGT. Positions 30–58 are NMP; sequence STGDMLREAKRSGTLEKRYLDIMDSGGLL. AMP is bound by residues Thr-31, Arg-36, 56–58, 84–87, and Gln-91; these read GLL and GFPR. Residues 128–158 are LID; it reads HRRTDKRSGQIYHLVYNPPPPGAELEHRADD. ATP-binding positions include Arg-129 and 138–139; that span reads IY. Positions 155 and 166 each coordinate AMP. Gly-194 is an ATP binding site.

This sequence belongs to the adenylate kinase family. Monomer.

The protein localises to the cytoplasm. It catalyses the reaction AMP + ATP = 2 ADP. Its pathway is purine metabolism; AMP biosynthesis via salvage pathway; AMP from ADP: step 1/1. In terms of biological role, catalyzes the reversible transfer of the terminal phosphate group between ATP and AMP. Plays an important role in cellular energy homeostasis and in adenine nucleotide metabolism. The sequence is that of Adenylate kinase from Sorangium cellulosum (strain So ce56) (Polyangium cellulosum (strain So ce56)).